The following is a 375-amino-acid chain: Chaperone protein DnaJ (375 aa).

Residues Asp5 to Gly69 form the J domain. The CR-type zinc-finger motif lies at Gly132–Arg214. The Zn(2+) site is built by Cys145, Cys148, Cys162, Cys165, Cys188, Cys191, Cys202, and Cys205. 4 CXXCXGXG motif repeats span residues Cys145–Gly152, Cys162–Gly169, Cys188–Gly195, and Cys202–Gly209.

Belongs to the DnaJ family. Homodimer. Requires Zn(2+) as cofactor.

It localises to the cytoplasm. Participates actively in the response to hyperosmotic and heat shock by preventing the aggregation of stress-denatured proteins and by disaggregating proteins, also in an autonomous, DnaK-independent fashion. Unfolded proteins bind initially to DnaJ; upon interaction with the DnaJ-bound protein, DnaK hydrolyzes its bound ATP, resulting in the formation of a stable complex. GrpE releases ADP from DnaK; ATP binding to DnaK triggers the release of the substrate protein, thus completing the reaction cycle. Several rounds of ATP-dependent interactions between DnaJ, DnaK and GrpE are required for fully efficient folding. Also involved, together with DnaK and GrpE, in the DNA replication of plasmids through activation of initiation proteins. The protein is Chaperone protein DnaJ of Bacillus velezensis (strain DSM 23117 / BGSC 10A6 / LMG 26770 / FZB42) (Bacillus amyloliquefaciens subsp. plantarum).